A 348-amino-acid polypeptide reads, in one-letter code: Alcohol dehydrogenase 1 (348 aa).

The Zn(2+) site is built by Cys44, His67, Cys98, Cys101, Cys104, Cys112, and Cys154. Residues 178-184 (GACGGLG), Asp202, Lys207, 269-271 (VGL), and Arg341 contribute to the NAD(+) site.

It belongs to the zinc-containing alcohol dehydrogenase family. In terms of assembly, homotetramer. The cofactor is Zn(2+).

It localises to the cytoplasm. The enzyme catalyses a primary alcohol + NAD(+) = an aldehyde + NADH + H(+). It carries out the reaction a secondary alcohol + NAD(+) = a ketone + NADH + H(+). The sequence is that of Alcohol dehydrogenase 1 (ADH1) from Kluyveromyces marxianus (Yeast).